We begin with the raw amino-acid sequence, 27 residues long: Potassium channel toxin kappa-KTx 2.2 (27 aa).

Cystine bridges form between Cys-3–Cys-21 and Cys-7–Cys-17.

It belongs to the short scorpion toxin superfamily. Potassium channel inhibitor kappa-KTx family. Kappa-KTx 2 subfamily. In terms of tissue distribution, expressed by the venom gland.

It is found in the secreted. In terms of biological role, omTx1 decreases the amplitude of the potassium current of the rat channels Kv1.1/KCNA1 by 17% and Kv1.2/KCNA2 by 12% as well as human Kv1.3/KCNA3 by 24%. Functionally, omTx2 decreases the amplitude of the potassium current of the rat channels Kv1.1/KCNA1 by 8% and Kv1.2/KCNA2 by 10% as well as human Kv1.3/KCNA3 by 36%. Also alters glucose-induced insulin release from pancreatic islets. This Opisthacanthus madagascariensis (Scorpion) protein is Potassium channel toxin kappa-KTx 2.2.